A 543-amino-acid polypeptide reads, in one-letter code: Biotinidase (543 aa).

A signal peptide spans 1 to 41 (MAHAHIQGGRRAKSRFVVCIMSGARSKLALFLCGCYVVALG). The CN hydrolase domain occupies 72–351 (NPLALISRQE…VGLIGAENAT (280 aa)). E112 functions as the Proton acceptor in the catalytic mechanism. N119 carries N-linked (GlcNAc...) asparagine glycosylation. N-linked (GlcNAc...) (complex) asparagine glycosylation is present at N150. An N-linked (GlcNAc...) asparagine glycan is attached at N203. The active-site Proton donor is K212. The active-site Nucleophile is C245. Residues N349, N402, and N489 are each glycosylated (N-linked (GlcNAc...) asparagine).

This sequence belongs to the carbon-nitrogen hydrolase superfamily. BTD/VNN family.

Its subcellular location is the secreted. The protein localises to the extracellular space. The enzyme catalyses biocytin + H2O = biotin + L-lysine. It catalyses the reaction biotin amide + H2O = biotin + NH4(+). Functionally, catalytic release of biotin from biocytin, the product of biotin-dependent carboxylases degradation. This Homo sapiens (Human) protein is Biotinidase.